The sequence spans 395 residues: ATP phosphoribosyltransferase regulatory subunit (395 aa).

This sequence belongs to the class-II aminoacyl-tRNA synthetase family. HisZ subfamily. As to quaternary structure, heteromultimer composed of HisG and HisZ subunits.

Its subcellular location is the cytoplasm. Its pathway is amino-acid biosynthesis; L-histidine biosynthesis; L-histidine from 5-phospho-alpha-D-ribose 1-diphosphate: step 1/9. In terms of biological role, required for the first step of histidine biosynthesis. May allow the feedback regulation of ATP phosphoribosyltransferase activity by histidine. This Thioalkalivibrio sulfidiphilus (strain HL-EbGR7) protein is ATP phosphoribosyltransferase regulatory subunit.